We begin with the raw amino-acid sequence, 100 residues long: Urease subunit gamma (100 aa).

The protein belongs to the urease gamma subunit family. Heterotrimer of UreA (gamma), UreB (beta) and UreC (alpha) subunits. Three heterotrimers associate to form the active enzyme.

The protein localises to the cytoplasm. It catalyses the reaction urea + 2 H2O + H(+) = hydrogencarbonate + 2 NH4(+). It functions in the pathway nitrogen metabolism; urea degradation; CO(2) and NH(3) from urea (urease route): step 1/1. This is Urease subunit gamma from Mycolicibacterium gilvum (strain PYR-GCK) (Mycobacterium gilvum (strain PYR-GCK)).